Here is a 1225-residue protein sequence, read N- to C-terminus: MSYQVCFKKYVKMRQWPHVLSLRVYASYFLLYNNLPLSSAMVHDGVHLISIKTILTDQPCPNTIYYAKYQVQRKDNEDAASLLEDKEAYLRNQDCIVHAKNDLLFVYDFQAIPSIPEESSSFMLLNSGAFSRLALFQKDELALLLDLYINFLQGLKKTVLYWLCKEYNFVPIYGVLLPLKLHPSFDTQLWNIYGYPVVDLQLSVLSKGHIEFYLKPTRQTVYRLSEVDNLVKKLDTVIRLAPTGCLATLTSVHANASAQTVDALKHRYGFSLTTTSKWVGVTLESSALEFSWPLELCFLETSALRMNDDSLSSNLTDLNNLVLPSNVVNNKKELTEFANEEAEASDKRKEGFTEKEETADAVVTLVPSHSSSPVNYSINSAKSTPASIKVNEEILVADHNVSDDILMEEIDDVGITEADFDYFDLPNVEEKVEMIEPNFANTMTTLDNEEINTSISQSNTSPNLNTHENIPKQMEIQSDDRMVTEDLNPYNVEVDIPEISLNISDSKIPTSAYMPSYYSAVIFPSSISSIFQKYNYGGKYWCPSPSLSTEDLFESFSVAESVTSTDEDICSTNFIQQDFTMEYNHDFFSSSKTPTNISEQSNPDSNYDTLSLAHQVLMNESKSANFDFSFLKSLDLQPTITLGKNDLLNAILSQNLWFRSLPFWKSMTTSFMMSQDVLNFSSYMRKPIRDYLEKILLGESSAVFLSKSPENYLSSINNGHHALNDNPPSQVNFSETLVNFSQPPRVLLKYNEKKLSLDSSAPENWISLCLQPYGESKDFEVFLLSSKSPDVSSKAISFFYDVQLAYENCKLGKLNLSETSINERVMGFSTNINETDNYDDNETTQSDTATSYEQLASVCVNELSGKNVLFFYFLEDDSEKLLKACQHFICVKDSIKRLGDNKFEDKSLRICTIPNSIFDSPNSHTTNSNSFFTKVSLDIYNNDPLLMDGSLKRREPAFLLKKPLLSTLNYQLKDINPRSSALGEYALHVTYTTVEEHLLICNWNDSYGEFETERRYFLQDLEIEDALQQILEVTFTFLNSMHMDWIVIVMKIGEMSDAEYLFWDQAIIPENLQGNVSLTVGYCSAEHGPGSTSKVFSRIPYSASSTVIRNNSSHELSLVAFIREMAMPVPNDEFKKISTILARGYLALDEDESYLPLLSIHLLISRNHDPYLMLNLILKHYLSMIYLQFRTYVSFSSLPLHISTVLYQKQLLQFMASDITHPVTS.

Belongs to the Mediator complex subunit 13 family. Component of the srb8-11 complex which consists of rb8, srb9(TRAP240), srb10 and srb11. The srb8-11 complex associates with the Mediator complex thereby blocking association with RNA polymerase II and leading to reduced transcriptional activation by Mediator.

The protein localises to the nucleus. Its function is as follows. Component of the srb8-11 complex. The srb8-11 complex is a regulatory module of the Mediator complex which is itself involved in regulation of basal and activated RNA polymerase II-dependent transcription. The srb8-11 complex may be involved in the transcriptional repression of a subset of genes regulated by Mediator. It may inhibit the association of the Mediator complex with RNA polymerase II to form the holoenzyme complex. In Schizosaccharomyces pombe (strain 972 / ATCC 24843) (Fission yeast), this protein is Mediator of RNA polymerase II transcription subunit 13 (srb9).